Reading from the N-terminus, the 298-residue chain is Zinc transport system membrane protein TroC (298 aa).

8 helical membrane passes run 16–36 (VVLG…FAVL), 41–61 (LFGD…FLLT), 68–88 (ILLL…LMVM), 97–117 (GAQG…LTHV), 144–164 (VLLI…FWKE), 187–207 (FMLT…VGVI), 229–249 (VLCA…SVVS), and 255–275 (LSTG…SIML).

Belongs to the ABC-3 integral membrane protein family.

It is found in the cell membrane. In terms of biological role, part of an ATP-driven transport system TroABCD for zinc. This chain is Zinc transport system membrane protein TroC (troC), found in Treponema pallidum (strain Nichols).